A 154-amino-acid polypeptide reads, in one-letter code: Vimentin (154 aa).

Residues Met-1–Arg-13 show a composition bias toward low complexity. Residues Met-1 to Val-31 form a disordered region. N-acetylserine is present on Ser-2. The head stretch occupies residues Ser-2 to Glu-95. Ser-5 bears the Phosphoserine mark. Ser-7 is modified (phosphoserine; by PKA and PKC; alternate). Residue Ser-7 is glycosylated (O-linked (GlcNAc) serine; alternate). Ser-8 carries the phosphoserine modification. Residues Ser-9 and Ser-10 each carry the phosphoserine; by PKC modification. Thr-20 is modified (phosphothreonine). Ser-25 is modified (phosphoserine; by PKA and PKC). Residue Ser-26 is modified to Phosphoserine; by PKC. An O-linked (GlcNAc) threonine glycan is attached at Thr-33. Residue Ser-34 is glycosylated (O-linked (GlcNAc) serine; alternate). Ser-34 is subject to Phosphoserine; by PKC; alternate. Ser-39 carries the phosphoserine; by CaMK2, PKA, PKC and ROCK2 modification. Ser-42 is subject to Phosphoserine; by PKC. Ser-49 carries the post-translational modification Phosphoserine. The residue at position 53 (Tyr-53) is a Phosphotyrosine. The residue at position 55 (Ser-55) is a Phosphoserine. Ser-56 is subject to Phosphoserine; by CDK5 and CDK1. At Tyr-61 the chain carries Phosphotyrosine. Residue Ser-66 is modified to Phosphoserine; by PKA and PKC. Position 72 is a phosphoserine; by AURKB and ROCK2 (Ser-72). Ser-83 is modified (phosphoserine; by CaMK2). Ser-87 carries the post-translational modification Phosphoserine. The interval Phe-96–Leu-131 is coil 1A. Residues Phe-96–Leu-131 adopt a coiled-coil conformation. In terms of domain architecture, IF rod spans Glu-103 to Met-154. Lys-104 participates in a covalent cross-link: Glycyl lysine isopeptide (Lys-Gly) (interchain with G-Cter in SUMO2). Tyr-117 carries the phosphotyrosine modification. An N6-acetyllysine; alternate mark is found at Lys-120, Lys-129, and Lys-139. N6-succinyllysine; alternate occurs at positions 120 and 129. Glycyl lysine isopeptide (Lys-Gly) (interchain with G-Cter in SUMO2); alternate cross-links involve residues Lys-120, Lys-129, and Lys-139. The tract at residues Leu-132–Glu-153 is linker 1. Ser-144 carries the phosphoserine modification. Met-154 is a region of interest (coil 1B).

It belongs to the intermediate filament family. As to quaternary structure, homomer assembled from elementary dimers. Identified in complexes that contain VIM, EZR, AHNAK, BFSP1, BFSP2, ANK2, PLEC, PRX and spectrin. Interacts with BCAS3. Interacts with LGSN. Interacts with SYNM. Interacts (via rod region) with PLEC (via CH 1 domain). Interacts with STK33. Interacts with LARP6. Interacts with RAB8B. Interacts with TOR1A; the interaction associates TOR1A with the cytoskeleton. Interacts with TOR1AIP1. Interacts with TOR1AIP1. Interacts with DIAPH1. Interacts with EPPK1; interaction is dependent of higher-order structure of intermediate filament. Interacts with the non-receptor tyrosine kinase SRMS; the interaction leads to phosphorylation of VIM. Interacts with NOD2. Interacts (via head region) with CORO1C. Interacts with HDGF. Interacts with PRKCE (via phorbol-ester/DAG-type 2 domain). Interacts with BFSP2. Interacts with PPL. Interacts with PKP1 and PKP2. Interacts with SCRIB (via PDZ domains); the interaction protects SCRIB from proteasomal degradation and facilitates SCRIB localization to intermediate filaments, the interaction is reduced by cell contact inhibition. Post-translationally, one of the most prominent phosphoproteins in various cells of mesenchymal origin. Phosphorylation is enhanced during cell division, at which time vimentin filaments are significantly reorganized. Phosphorylation by PKN1 inhibits the formation of filaments. Filament disassembly during mitosis is promoted by phosphorylation at Ser-55 as well as by nestin. Phosphorylated at Ser-56 by CDK5 during neutrophil secretion in the cytoplasm. Phosphorylated by STK33. Phosphorylated on tyrosine residues by SRMS.

The protein localises to the cytoplasm. Its subcellular location is the cytoskeleton. The protein resides in the nucleus matrix. It is found in the cell membrane. Functionally, vimentins are class-III intermediate filaments found in various non-epithelial cells, especially mesenchymal cells. Vimentin is attached to the nucleus, endoplasmic reticulum, and mitochondria, either laterally or terminally. Plays a role in cell directional movement, orientation, cell sheet organization and Golgi complex polarization at the cell migration front. Protects SCRIB from proteasomal degradation and facilitates its localization to intermediate filaments in a cell contact-mediated manner. Its function is as follows. Involved with LARP6 in the stabilization of type I collagen mRNAs for CO1A1 and CO1A2. This chain is Vimentin (VIM), found in Ovis aries (Sheep).